Consider the following 111-residue polypeptide: UPF0342 protein SAG1376 (111 aa).

The span at 52–63 shows a compositional bias: polar residues; it reads QEMMQSGQMPSQ. The tract at residues 52–71 is disordered; it reads QEMMQSGQMPSQEEQDEMSK.

This sequence belongs to the UPF0342 family.

The chain is UPF0342 protein SAG1376 from Streptococcus agalactiae serotype V (strain ATCC BAA-611 / 2603 V/R).